A 186-amino-acid chain; its full sequence is ATP synthase subunit delta (186 aa).

The protein belongs to the ATPase delta chain family. As to quaternary structure, F-type ATPases have 2 components, F(1) - the catalytic core - and F(0) - the membrane proton channel. F(1) has five subunits: alpha(3), beta(3), gamma(1), delta(1), epsilon(1). F(0) has three main subunits: a(1), b(2) and c(10-14). The alpha and beta chains form an alternating ring which encloses part of the gamma chain. F(1) is attached to F(0) by a central stalk formed by the gamma and epsilon chains, while a peripheral stalk is formed by the delta and b chains.

It is found in the cell membrane. Its function is as follows. F(1)F(0) ATP synthase produces ATP from ADP in the presence of a proton or sodium gradient. F-type ATPases consist of two structural domains, F(1) containing the extramembraneous catalytic core and F(0) containing the membrane proton channel, linked together by a central stalk and a peripheral stalk. During catalysis, ATP synthesis in the catalytic domain of F(1) is coupled via a rotary mechanism of the central stalk subunits to proton translocation. In terms of biological role, this protein is part of the stalk that links CF(0) to CF(1). It either transmits conformational changes from CF(0) to CF(1) or is implicated in proton conduction. This is ATP synthase subunit delta from Symbiobacterium thermophilum (strain DSM 24528 / JCM 14929 / IAM 14863 / T).